The primary structure comprises 593 residues: Methylenetetrahydrofolate reductase (NADH) 1 (593 aa).

Glu21 acts as the Proton donor/acceptor in catalysis. Residues 21 to 26 and 52 to 53 contribute to the NAD(+) site; these read EYFPPK and TW. FAD-binding positions include 52–53, His81, 111–113, Tyr153, 157–160, Asp175, and Lys182; these read TW, RGD, and HPDA. Asp113 provides a ligand contact to substrate. Residues Gln193 and Tyr285 each coordinate substrate.

This sequence belongs to the methylenetetrahydrofolate reductase family. As to quaternary structure, homodimer. The cofactor is FAD.

The catalysed reaction is (6S)-5-methyl-5,6,7,8-tetrahydrofolate + NAD(+) = (6R)-5,10-methylene-5,6,7,8-tetrahydrofolate + NADH + H(+). Its pathway is one-carbon metabolism; tetrahydrofolate interconversion. Its activity is regulated as follows. Plant MTHFRs strongly prefer NADH over NADPH. Not inhibited by methionine or S-adenosylmethionine. The probable reversibility of the MTHFR reaction in plants suggests that they can metabolize the methyl group of 5,10-methylenetetrahydrofolate to serine, sugars and starch. In Zea mays (Maize), this protein is Methylenetetrahydrofolate reductase (NADH) 1.